A 160-amino-acid chain; its full sequence is Putative 4-hydroxy-4-methyl-2-oxoglutarate aldolase (160 aa).

Substrate contacts are provided by residues 78–81 (GDVI) and Arg100. Asp101 provides a ligand contact to a divalent metal cation.

Belongs to the class II aldolase/RraA-like family. Homotrimer. The cofactor is a divalent metal cation.

The enzyme catalyses 4-hydroxy-4-methyl-2-oxoglutarate = 2 pyruvate. It catalyses the reaction oxaloacetate + H(+) = pyruvate + CO2. In terms of biological role, catalyzes the aldol cleavage of 4-hydroxy-4-methyl-2-oxoglutarate (HMG) into 2 molecules of pyruvate. Also contains a secondary oxaloacetate (OAA) decarboxylase activity due to the common pyruvate enolate transition state formed following C-C bond cleavage in the retro-aldol and decarboxylation reactions. This Mycolicibacterium vanbaalenii (strain DSM 7251 / JCM 13017 / BCRC 16820 / KCTC 9966 / NRRL B-24157 / PYR-1) (Mycobacterium vanbaalenii) protein is Putative 4-hydroxy-4-methyl-2-oxoglutarate aldolase.